A 160-amino-acid chain; its full sequence is Cyanate hydratase (160 aa).

Residues Arg100, Glu103, and Ser126 contribute to the active site.

This sequence belongs to the cyanase family.

The catalysed reaction is cyanate + hydrogencarbonate + 3 H(+) = NH4(+) + 2 CO2. Its function is as follows. Catalyzes the reaction of cyanate with bicarbonate to produce ammonia and carbon dioxide. The polypeptide is Cyanate hydratase (Aspergillus flavus (strain ATCC 200026 / FGSC A1120 / IAM 13836 / NRRL 3357 / JCM 12722 / SRRC 167)).